The chain runs to 202 residues: Recombination protein RecR (202 aa).

The C4-type zinc-finger motif lies at cysteine 61 to cysteine 76. The Toprim domain occupies glycine 84–proline 179.

Belongs to the RecR family.

May play a role in DNA repair. It seems to be involved in an RecBC-independent recombinational process of DNA repair. It may act with RecF and RecO. The polypeptide is Recombination protein RecR (Bordetella bronchiseptica (strain ATCC BAA-588 / NCTC 13252 / RB50) (Alcaligenes bronchisepticus)).